We begin with the raw amino-acid sequence, 389 residues long: Large envelope protein (389 aa).

At M1 the chain carries N-acetylmethionine. A lipid anchor (N-myristoyl glycine; by host) is attached at G2. Residues 2 to 108 (GQNLSTSNPL…PPLRNTHPQA (107 aa)) are pre-S1. Residues 2-163 (GQNLSTSNPL…FSRIGDPALN (162 aa)) are pre-S. The Virion surface; in external conformation portion of the chain corresponds to 2–170 (GQNLSTSNPL…ALNMENITSG (169 aa)). The Intravirion; in internal conformation portion of the chain corresponds to 2-242 (GQNLSTSNPL…PGYRWMCLRR (241 aa)). The segment at 76 to 103 (TLPANPPPASTNRQSGRQPTPLSPPLRN) is disordered. Residues 85-95 (STNRQSGRQPT) show a composition bias toward polar residues. Residues 109–163 (MQWNSTTFHQTLQDPRVRGLYLPAGGSSSGTVNPVPTTVSPISSIFSRIGDPALN) form a pre-S2 region. Residues 171–191 (FLGPLLVLQAGFFLLTKILTI) form a helical membrane-spanning segment. Topologically, residues 192 to 242 (PKSLDSWWTSLNFLGGTTVCLGQNSQSPTSNHSPTSCPPTCPGYRWMCLRR) are intravirion; in external conformation. Residues 243–263 (FIIFLFILLLCLIFLLVLLDY) traverse the membrane as a helical segment. The Virion surface portion of the chain corresponds to 264–337 (QGMLPVCPLI…WASARFSWLS (74 aa)). N309 is a glycosylation site (N-linked (GlcNAc...) asparagine; by host). A helical membrane pass occupies residues 338-358 (LLVPFVQWFVGLSPTVWLLVI). The Intravirion portion of the chain corresponds to 359–364 (WMMWYW). Residues 365 to 387 (GPKLFTILSPFLPLLPIFFCLWV) form a helical membrane-spanning segment. The Virion surface portion of the chain corresponds to 388-389 (YI).

The protein belongs to the orthohepadnavirus major surface antigen family. In its internal form (Li-HBsAg), interacts with the capsid protein and with the isoform S. Interacts with host chaperone CANX. In terms of assembly, associates with host chaperone CANX through its pre-S2 N glycan; this association may be essential for isoform M proper secretion. As to quaternary structure, interacts with isoform L. Interacts with the antigens of satellite virus HDV (HDVAgs); this interaction is required for encapsidation of HDV genomic RNA. Isoform M is N-terminally acetylated by host at a ratio of 90%, and N-glycosylated by host at the pre-S2 region. Post-translationally, myristoylated.

Its subcellular location is the virion membrane. In terms of biological role, the large envelope protein exists in two topological conformations, one which is termed 'external' or Le-HBsAg and the other 'internal' or Li-HBsAg. In its external conformation the protein attaches the virus to cell receptors and thereby initiating infection. This interaction determines the species specificity and liver tropism. This attachment induces virion internalization predominantly through caveolin-mediated endocytosis. The large envelope protein also assures fusion between virion membrane and endosomal membrane. In its internal conformation the protein plays a role in virion morphogenesis and mediates the contact with the nucleocapsid like a matrix protein. The middle envelope protein plays an important role in the budding of the virion. It is involved in the induction of budding in a nucleocapsid independent way. In this process the majority of envelope proteins bud to form subviral lipoprotein particles of 22 nm of diameter that do not contain a nucleocapsid. This is Large envelope protein from Homo sapiens (Human).